The sequence spans 761 residues: Neutral ceramidase (761 aa).

At 1-11 the chain is on the cytoplasmic side; the sequence is MAKRTFSSLEA. The chain crosses the membrane as a helical; Signal-anchor for type II membrane protein span at residues 12–32; the sequence is FLIFLLVMMTAITVALLTLLF. At 33 to 761 the chain is on the lumenal side; it reads VTSGTIENHK…ISSPFEIVTT (729 aa). The segment at 43 to 76 is disordered; that stretch reads DSGNHWVSTTQGPTTTQSSPTTQTPTTQTPDLPP. Over residues 50–76 the composition is skewed to low complexity; it reads STTQGPTTTQSSPTTQTPTTQTPDLPP. 5 O-linked (GalNAc...) threonine glycosylation sites follow: threonine 51, threonine 52, threonine 56, threonine 57, and threonine 58. Residues serine 60 and serine 61 are each glycosylated (O-linked (GalNAc...) serine). O-linked (GalNAc...) threonine glycans are attached at residues threonine 63, threonine 64, threonine 66, threonine 68, threonine 69, and threonine 71. Leucine 115 serves as a coordination point for Ca(2+). Histidine 175 is a binding site for Zn(2+). Asparagine 198 is a glycosylation site (N-linked (GlcNAc...) asparagine). Histidine 284 lines the Zn(2+) pocket. Catalysis depends on serine 335, which acts as the Nucleophile. Cystine bridges form between cysteine 343-cysteine 357 and cysteine 350-cysteine 365. N-linked (GlcNAc...) asparagine glycans are attached at residues asparagine 412 and asparagine 449. An intrachain disulfide couples cysteine 429 to cysteine 479. Zn(2+) contacts are provided by glutamate 521 and tyrosine 560. Ca(2+) is bound by residues aspartate 693, serine 695, and threonine 698. The interval 751-761 is required for correct folding and localization; the sequence is GISSPFEIVTT.

It belongs to the neutral ceramidase family. Zn(2+) is required as a cofactor. Post-translationally, proteolytic cleavage of the N-terminus removes the signal-anchor and produces a soluble form of the protein. In terms of processing, N-glycosylated. Required for enzyme activity. O-glycosylated. Required to retain it as a type II membrane protein at the cell surface. Post-translationally, phosphorylated. May prevent ubiquitination and subsequent degradation. In terms of processing, ubiquitinated, leading to its degradation by the proteasome. Ubiquitination is triggered by nitric oxide. Highly expressed in brain, kidney and heart. Expressed at lower level in other tissues such as liver. Expressed in intestine, kidney and liver (at protein level). Localizes in the epithelia of the jejunum and ileum.

It is found in the cell membrane. The protein resides in the membrane raft. The protein localises to the membrane. Its subcellular location is the caveola. It localises to the golgi apparatus membrane. It is found in the mitochondrion. The protein resides in the secreted. The protein localises to the extracellular exosome. It carries out the reaction an N-acylsphing-4-enine + H2O = sphing-4-enine + a fatty acid. The catalysed reaction is N-hexadecanoylsphing-4-enine + H2O = sphing-4-enine + hexadecanoate. The enzyme catalyses N-tetradecanoylsphing-4-enine + H2O = tetradecanoate + sphing-4-enine. It catalyses the reaction N-(9Z-octadecenoyl)-sphing-4-enine + H2O = sphing-4-enine + (9Z)-octadecenoate. It carries out the reaction N-(15Z-tetracosenoyl)-sphing-4-enine + H2O = (15Z)-tetracosenoate + sphing-4-enine. The catalysed reaction is N-octanoylsphing-4-enine + H2O = octanoate + sphing-4-enine. The enzyme catalyses N-dodecanoylsphing-4-enine + H2O = dodecanoate + sphing-4-enine. It catalyses the reaction N-(hexanoyl)sphing-4-enine + H2O = hexanoate + sphing-4-enine. It carries out the reaction N-octadecanoylsphing-4-enine + H2O = sphing-4-enine + octadecanoate. The catalysed reaction is sphinganine + hexadecanoate = N-hexadecanoylsphinganine + H2O. The enzyme catalyses N-(octadecanoyl)-sphinganine + H2O = sphinganine + octadecanoate. The protein operates within lipid metabolism; sphingolipid metabolism. With respect to regulation, the reverse reaction is inhibited by Zn(2+) and Cu(2+). Inhibited by cardiolipin and phosphatidic acid. In terms of biological role, plasma membrane ceramidase that hydrolyzes sphingolipid ceramides into sphingosine and free fatty acids at neutral pH. Ceramides, sphingosine, and its phosphorylated form sphingosine-1-phosphate are bioactive lipids that mediate cellular signaling pathways regulating several biological processes including cell proliferation, apoptosis and differentiation. Also catalyzes the reverse reaction allowing the synthesis of ceramides from fatty acids and sphingosine. Together with sphingomyelinase, participates in the production of sphingosine and sphingosine-1-phosphate from the degradation of sphingomyelin, a sphingolipid enriched in the plasma membrane of cells. Also participates in the hydrolysis of ceramides from the extracellular milieu allowing the production of sphingosine-1-phosphate inside and outside cells. This is the case for instance with the digestion of dietary sphingolipids in the intestinal tract. The polypeptide is Neutral ceramidase (Asah2) (Rattus norvegicus (Rat)).